Reading from the N-terminus, the 310-residue chain is Malate dehydrogenase (310 aa).

NAD(+)-binding positions include 7-12 (GAGNVG) and Asp-32. Substrate contacts are provided by Arg-81 and Arg-87. NAD(+)-binding positions include Asn-94 and 117–119 (VSN). Positions 119 and 150 each coordinate substrate. The Proton acceptor role is filled by His-174.

Belongs to the LDH/MDH superfamily. MDH type 3 family.

It carries out the reaction (S)-malate + NAD(+) = oxaloacetate + NADH + H(+). In terms of biological role, catalyzes the reversible oxidation of malate to oxaloacetate. In Chloroherpeton thalassium (strain ATCC 35110 / GB-78), this protein is Malate dehydrogenase.